A 187-amino-acid polypeptide reads, in one-letter code: uncharacterized protein (187 aa).

The chain crosses the membrane as a helical span at residues 3–23 (AIIIFLILFIVGVLIGVGVYY).

It is found in the membrane. This is an uncharacterized protein from Methanocaldococcus jannaschii (strain ATCC 43067 / DSM 2661 / JAL-1 / JCM 10045 / NBRC 100440) (Methanococcus jannaschii).